Consider the following 147-residue polypeptide: Hemoglobin subunit epsilon-4 (147 aa).

A Globin domain is found at histidine 3–histidine 147. Heme b is bound by residues histidine 64 and histidine 93.

Belongs to the globin family. As to expression, red blood cells.

Functionally, hemoglobin epsilon chain is a beta-type chain found in early embryos. This is Hemoglobin subunit epsilon-4 (HBE4) from Bos taurus (Bovine).